Reading from the N-terminus, the 278-residue chain is Large ribosomal subunit protein uL24m (278 aa).

Positions 109–142 (FFPGDLVQVMVGKDKGRQGLVLTTSRDSSDVIVD) constitute a KOW domain.

The protein belongs to the universal ribosomal protein uL24 family.

It is found in the mitochondrion. This Caenorhabditis elegans protein is Large ribosomal subunit protein uL24m (mrpl-24).